A 309-amino-acid chain; its full sequence is L-aminoadipate-semialdehyde dehydrogenase-phosphopantetheinyl transferase (309 aa).

CoA-binding positions include Arg-47, Arg-86–Lys-91, and Asn-108–His-111. Positions 129 and 181 each coordinate Mg(2+). A CoA-binding site is contributed by Glu-181 to Lys-185.

It belongs to the P-Pant transferase superfamily. AcpS family. As to quaternary structure, monomer. It depends on Mg(2+) as a cofactor.

It is found in the cytoplasm. It localises to the cytosol. It carries out the reaction apo-[ACP] + CoA = holo-[ACP] + adenosine 3',5'-bisphosphate + H(+). The enzyme catalyses apo-[ACP] + acetyl-CoA = acetyl-[ACP] + adenosine 3',5'-bisphosphate + H(+). In terms of biological role, catalyzes the post-translational modification of target proteins by phosphopantetheine. Can transfer the 4'-phosphopantetheine moiety from coenzyme A, regardless of whether the CoA is presented in the free thiol form or as an acetyl thioester, to a serine residue of a broad range of acceptors including the acyl carrier domain of FASN. The polypeptide is L-aminoadipate-semialdehyde dehydrogenase-phosphopantetheinyl transferase (Aasdhppt) (Mus musculus (Mouse)).